The chain runs to 415 residues: Serine hydroxymethyltransferase (415 aa).

(6S)-5,6,7,8-tetrahydrofolate is bound by residues Leu120 and 124–126 (GHL). Lys229 is modified (N6-(pyridoxal phosphate)lysine).

It belongs to the SHMT family. In terms of assembly, homodimer. The cofactor is pyridoxal 5'-phosphate.

The protein resides in the cytoplasm. It carries out the reaction (6R)-5,10-methylene-5,6,7,8-tetrahydrofolate + glycine + H2O = (6S)-5,6,7,8-tetrahydrofolate + L-serine. It participates in one-carbon metabolism; tetrahydrofolate interconversion. It functions in the pathway amino-acid biosynthesis; glycine biosynthesis; glycine from L-serine: step 1/1. Functionally, catalyzes the reversible interconversion of serine and glycine with tetrahydrofolate (THF) serving as the one-carbon carrier. This reaction serves as the major source of one-carbon groups required for the biosynthesis of purines, thymidylate, methionine, and other important biomolecules. Also exhibits THF-independent aldolase activity toward beta-hydroxyamino acids, producing glycine and aldehydes, via a retro-aldol mechanism. The polypeptide is Serine hydroxymethyltransferase (Caldicellulosiruptor bescii (strain ATCC BAA-1888 / DSM 6725 / KCTC 15123 / Z-1320) (Anaerocellum thermophilum)).